Here is a 303-residue protein sequence, read N- to C-terminus: Probable alpha-L-glutamate ligase (303 aa).

Positions 104-287 (LQLLAREGID…IAGMMIEFIE (184 aa)) constitute an ATP-grasp domain. Residues K141, 178 to 179 (EY), D187, and 211 to 213 (RSN) contribute to the ATP site. Mg(2+) is bound by residues D248, E260, and N262. D248, E260, and N262 together coordinate Mn(2+).

It belongs to the RimK family. It depends on Mg(2+) as a cofactor. The cofactor is Mn(2+).

This Pectobacterium carotovorum subsp. carotovorum (strain PC1) protein is Probable alpha-L-glutamate ligase.